A 109-amino-acid polypeptide reads, in one-letter code: Large ribosomal subunit protein P1A (109 aa).

The span at 69 to 84 (APVAGGAAAPAAADGE) shows a compositional bias: low complexity. Residues 69–109 (APVAGGAAAPAAADGEAPAEEKEEAKEEEESDEDMGFGLFD) form a disordered region. Positions 94 to 103 (KEEEESDEDM) are enriched in acidic residues.

This sequence belongs to the eukaryotic ribosomal protein P1/P2 family. Component of the large ribosomal subunit (LSU). Mature yeast ribosomes consist of a small (40S) and a large (60S) subunit. The 40S small subunit contains 1 molecule of ribosomal RNA (18S rRNA) and at least 33 different proteins. The large 60S subunit contains 3 rRNA molecules (25S, 5.8S and 5S rRNA) and at least 46 different proteins. The acidic ribosomal P-proteins form the stalk structure of the 60S subunit. They are organized as a pentameric complex in which uL10/P0 interacts with 2 heterodimers of P1 and P2 proteins.

The protein resides in the cytoplasm. Functionally, component of the ribosome, a large ribonucleoprotein complex responsible for the synthesis of proteins in the cell. The small ribosomal subunit (SSU) binds messenger RNAs (mRNAs) and translates the encoded message by selecting cognate aminoacyl-transfer RNA (tRNA) molecules. The large subunit (LSU) contains the ribosomal catalytic site termed the peptidyl transferase center (PTC), which catalyzes the formation of peptide bonds, thereby polymerizing the amino acids delivered by tRNAs into a polypeptide chain. The nascent polypeptides leave the ribosome through a tunnel in the LSU and interact with protein factors that function in enzymatic processing, targeting, and the membrane insertion of nascent chains at the exit of the ribosomal tunnel. In Schizosaccharomyces pombe (strain 972 / ATCC 24843) (Fission yeast), this protein is Large ribosomal subunit protein P1A (rpp101).